Here is a 213-residue protein sequence, read N- to C-terminus: MTSKPTCLIVASAASAGVSARSFQQCFNLCNPVFNLQTATPGGKSIDFTGVDDSTGRWVQEFSIKPYANPAKLESIDGARYQALLIPDCPGAMNDLAHSGSLARILSHFISQQKPVCAVGQGVAALCCATEDQKWIFSRYSMTGPSVFELVRSSEFANLPLIVEDFIKDNGGSYTASIEDAVHVVLDRHLITGQNIQSTTAAVNNLILLCNNR.

An N-terminal signal peptide occupies residues 1–20; that stretch reads MTSKPTCLIVASAASAGVSA.

This sequence belongs to the peptidase C56 family. In terms of assembly, homotetramer. Component of the FERRY complex.

Its subcellular location is the secreted. It is found in the early endosome. Its function is as follows. Component of the FERRY complex (Five-subunit Endosomal Rab5 and RNA/ribosome intermediary). The FERRY complex directly interacts with mRNAs and RAB5A, and functions as a RAB5A effector involved in the localization and the distribution of specific mRNAs most likely by mediating their endosomal transport. The complex recruits mRNAs and ribosomes to early endosomes through direct mRNA-interaction. This chain is Glutamine amidotransferase-like class 1 domain-containing protein 1, found in Danio rerio (Zebrafish).